The primary structure comprises 104 residues: Large ribosomal subunit protein uL23 (104 aa).

It belongs to the universal ribosomal protein uL23 family. Part of the 50S ribosomal subunit. Contacts protein L29, and trigger factor when it is bound to the ribosome.

In terms of biological role, one of the early assembly proteins it binds 23S rRNA. One of the proteins that surrounds the polypeptide exit tunnel on the outside of the ribosome. Forms the main docking site for trigger factor binding to the ribosome. In Burkholderia multivorans (strain ATCC 17616 / 249), this protein is Large ribosomal subunit protein uL23.